The primary structure comprises 294 residues: 4-hydroxy-tetrahydrodipicolinate synthase (294 aa).

Residue threonine 47 coordinates pyruvate. Catalysis depends on tyrosine 135, which acts as the Proton donor/acceptor. Lysine 163 acts as the Schiff-base intermediate with substrate in catalysis. Threonine 205 serves as a coordination point for pyruvate.

This sequence belongs to the DapA family. As to quaternary structure, homotetramer; dimer of dimers.

Its subcellular location is the cytoplasm. It catalyses the reaction L-aspartate 4-semialdehyde + pyruvate = (2S,4S)-4-hydroxy-2,3,4,5-tetrahydrodipicolinate + H2O + H(+). It participates in amino-acid biosynthesis; L-lysine biosynthesis via DAP pathway; (S)-tetrahydrodipicolinate from L-aspartate: step 3/4. In terms of biological role, catalyzes the condensation of (S)-aspartate-beta-semialdehyde [(S)-ASA] and pyruvate to 4-hydroxy-tetrahydrodipicolinate (HTPA). The sequence is that of 4-hydroxy-tetrahydrodipicolinate synthase from Rickettsia conorii (strain ATCC VR-613 / Malish 7).